Reading from the N-terminus, the 477-residue chain is 23S rRNA (uracil(1939)-C(5))-methyltransferase RlmD (477 aa).

The TRAM domain occupies Lys-7–Ala-66. [4Fe-4S] cluster contacts are provided by Cys-79, Cys-89, Cys-92, and Cys-171. S-adenosyl-L-methionine is bound by residues Gln-280, Phe-309, Asn-314, Glu-330, Asn-365, and Asp-386. Catalysis depends on Cys-432, which acts as the Nucleophile.

This sequence belongs to the class I-like SAM-binding methyltransferase superfamily. RNA M5U methyltransferase family. RlmD subfamily.

The catalysed reaction is uridine(1939) in 23S rRNA + S-adenosyl-L-methionine = 5-methyluridine(1939) in 23S rRNA + S-adenosyl-L-homocysteine + H(+). Catalyzes the formation of 5-methyl-uridine at position 1939 (m5U1939) in 23S rRNA. The polypeptide is 23S rRNA (uracil(1939)-C(5))-methyltransferase RlmD (Albidiferax ferrireducens (strain ATCC BAA-621 / DSM 15236 / T118) (Rhodoferax ferrireducens)).